The sequence spans 477 residues: uncharacterized protein (477 aa).

A helical transmembrane segment spans residues valine 107–isoleucine 129.

It is found in the membrane. This is an uncharacterized protein from Treponema pallidum (strain Nichols).